The chain runs to 230 residues: Flagellar L-ring protein (230 aa).

Residues 1–15 form the signal peptide; the sequence is MSRLPSLSSLCLAIA. C16 carries N-palmitoyl cysteine lipidation. C16 carries S-diacylglycerol cysteine lipidation.

It belongs to the FlgH family. As to quaternary structure, the basal body constitutes a major portion of the flagellar organelle and consists of four rings (L,P,S, and M) mounted on a central rod.

Its subcellular location is the cell outer membrane. The protein resides in the bacterial flagellum basal body. In terms of biological role, assembles around the rod to form the L-ring and probably protects the motor/basal body from shearing forces during rotation. This is Flagellar L-ring protein from Xanthomonas campestris pv. campestris (strain 8004).